Reading from the N-terminus, the 218-residue chain is Ribose-5-phosphate isomerase A (218 aa).

Residues 28-31 (TGST), 81-84 (DGAD), and 94-97 (KGGG) each bind substrate. Residue Glu103 is the Proton acceptor of the active site. Lys121 is a binding site for substrate.

It belongs to the ribose 5-phosphate isomerase family. Homodimer.

The catalysed reaction is aldehydo-D-ribose 5-phosphate = D-ribulose 5-phosphate. It functions in the pathway carbohydrate degradation; pentose phosphate pathway; D-ribose 5-phosphate from D-ribulose 5-phosphate (non-oxidative stage): step 1/1. Catalyzes the reversible conversion of ribose-5-phosphate to ribulose 5-phosphate. The protein is Ribose-5-phosphate isomerase A of Yersinia pseudotuberculosis serotype IB (strain PB1/+).